A 475-amino-acid polypeptide reads, in one-letter code: UDP-N-acetylmuramate--L-alanine ligase (475 aa).

114-120 (GTHGKTT) lines the ATP pocket.

Belongs to the MurCDEF family.

The protein resides in the cytoplasm. It catalyses the reaction UDP-N-acetyl-alpha-D-muramate + L-alanine + ATP = UDP-N-acetyl-alpha-D-muramoyl-L-alanine + ADP + phosphate + H(+). It functions in the pathway cell wall biogenesis; peptidoglycan biosynthesis. Its function is as follows. Cell wall formation. This chain is UDP-N-acetylmuramate--L-alanine ligase, found in Bartonella henselae (strain ATCC 49882 / DSM 28221 / CCUG 30454 / Houston 1) (Rochalimaea henselae).